Here is a 310-residue protein sequence, read N- to C-terminus: Fatty acid elongase 1 (310 aa).

Over 1–63 the chain is Lumenal; that stretch reads MVSDWKNFCL…VGKQPLSEPR (63 aa). Residues 64–84 traverse the membrane as a helical segment; sequence PVLLFIAMYYVVIFGGRSLVK. The Cytoplasmic portion of the chain corresponds to 85–100; that stretch reads SCKPLKLRFISQVHNL. Residues 101–121 form a helical membrane-spanning segment; it reads MLTSVSFLWLILMVEQMLPIV. Residues 122–141 lie on the Lumenal side of the membrane; the sequence is YRHGLYFAVCNVESWTQPME. The chain crosses the membrane as a helical span at residues 142–163; sequence TLYYLNYMTKFVEFADTVLMVL. Over 164–174 the chain is Cytoplasmic; sequence KHRKLTFLHTY. The HxxHH motif motif lies at 172–176; that stretch reads HTYHH. A helical transmembrane segment spans residues 175 to 196; sequence HHGATALLCYNQLVGYTAVTWV. At 197–201 the chain is on the lumenal side; sequence PVTLN. Residues 202–223 form a helical membrane-spanning segment; that stretch reads LAVHVLMYWYYFLSASGIRVWW. Residues 224–234 are Cytoplasmic-facing; sequence KAWVTRLQIVQ. A helical transmembrane segment spans residues 235 to 255; the sequence is FMLDLIVVYYVLYQKIVAAYF. Over 256–271 the chain is Lumenal; sequence KNACTPQCEDCLGSMT. The chain crosses the membrane as a helical span at residues 272–292; it reads AIAAGAAILTSYLFLFISFYI. Residues 293 to 310 lie on the Cytoplasmic side of the membrane; it reads EVYKRGSASGKKKINKNN. A Di-lysine motif motif is present at residues 304–307; the sequence is KKIN.

Belongs to the ELO family.

It is found in the endoplasmic reticulum membrane. It carries out the reaction a very-long-chain acyl-CoA + malonyl-CoA + H(+) = a very-long-chain 3-oxoacyl-CoA + CO2 + CoA. The enzyme catalyses tetradecanoyl-CoA + malonyl-CoA + H(+) = 3-oxohexadecanoyl-CoA + CO2 + CoA. The catalysed reaction is (9Z)-tetradecenoyl-CoA + malonyl-CoA + H(+) = 3-oxo-(11Z)-hexadecenoyl-CoA + CO2 + CoA. Component of a microsomal membrane bound medium-chain fatty acid elongation system, which extends medium-chain-length fatty acids to long-chain fatty acids. Component of elongase I, which extends 12-16-carbon fatty acyl-CoAs such as lauroyl-CoA to 14-18-carbon fatty acids by incorporation of malonyl-CoA. The protein is Fatty acid elongase 1 of Saccharomyces cerevisiae (strain ATCC 204508 / S288c) (Baker's yeast).